The following is a 179-amino-acid chain: Ribosome maturation factor RimM (179 aa).

Positions 99-174 (EEDEYYFDQI…IMIVDLPEGL (76 aa)) constitute a PRC barrel domain.

This sequence belongs to the RimM family. As to quaternary structure, binds ribosomal protein uS19.

It localises to the cytoplasm. Its function is as follows. An accessory protein needed during the final step in the assembly of 30S ribosomal subunit, possibly for assembly of the head region. Essential for efficient processing of 16S rRNA. May be needed both before and after RbfA during the maturation of 16S rRNA. It has affinity for free ribosomal 30S subunits but not for 70S ribosomes. The sequence is that of Ribosome maturation factor RimM from Natranaerobius thermophilus (strain ATCC BAA-1301 / DSM 18059 / JW/NM-WN-LF).